Reading from the N-terminus, the 145-residue chain is D-aminoacyl-tRNA deacylase (145 aa).

The Gly-cisPro motif, important for rejection of L-amino acids motif lies at 137-138; the sequence is GP.

Belongs to the DTD family. Homodimer.

Its subcellular location is the cytoplasm. The catalysed reaction is glycyl-tRNA(Ala) + H2O = tRNA(Ala) + glycine + H(+). It catalyses the reaction a D-aminoacyl-tRNA + H2O = a tRNA + a D-alpha-amino acid + H(+). In terms of biological role, an aminoacyl-tRNA editing enzyme that deacylates mischarged D-aminoacyl-tRNAs. Also deacylates mischarged glycyl-tRNA(Ala), protecting cells against glycine mischarging by AlaRS. Acts via tRNA-based rather than protein-based catalysis; rejects L-amino acids rather than detecting D-amino acids in the active site. By recycling D-aminoacyl-tRNA to D-amino acids and free tRNA molecules, this enzyme counteracts the toxicity associated with the formation of D-aminoacyl-tRNA entities in vivo and helps enforce protein L-homochirality. The polypeptide is D-aminoacyl-tRNA deacylase (Deinococcus radiodurans (strain ATCC 13939 / DSM 20539 / JCM 16871 / CCUG 27074 / LMG 4051 / NBRC 15346 / NCIMB 9279 / VKM B-1422 / R1)).